The following is a 202-amino-acid chain: D-alanyl-D-alanine dipeptidase (202 aa).

Positions 116 and 123 each coordinate Zn(2+). Catalysis depends on Glu-181, which acts as the Proton donor/acceptor. His-184 provides a ligand contact to Zn(2+).

This sequence belongs to the peptidase M15D family. The cofactor is Zn(2+).

It carries out the reaction D-alanyl-D-alanine + H2O = 2 D-alanine. Its function is as follows. Catalyzes hydrolysis of the D-alanyl-D-alanine dipeptide. May play a role in immunity or defense against glycopeptide antibiotics (perhaps at a moderate level) in the soil environment. Might confer vancomycin resistance to S.coelicolor. This chain is D-alanyl-D-alanine dipeptidase (vanX), found in Streptomyces coelicolor (strain ATCC BAA-471 / A3(2) / M145).